A 582-amino-acid polypeptide reads, in one-letter code: Urocanate reductase (582 aa).

The signal sequence occupies residues Met1–Gly20. Cys21 carries N-palmitoyl cysteine lipidation. A lipid anchor (S-diacylglycerol cysteine) is attached at Cys21. Thr93 is modified (FMN phosphoryl threonine). Positions 143, 162, 170, 171, 175, 176, 285, and 352 each coordinate FAD. Arg411 serves as the catalytic Proton donor. Positions 521, 550, and 565 each coordinate FAD.

Belongs to the FAD-dependent oxidoreductase 2 family. FRD/SDH subfamily. The cofactor is FAD. FMN serves as cofactor.

Its subcellular location is the cell membrane. The enzyme catalyses dihydrourocanate + A = urocanate + AH2. Catalyzes the two-electron reduction of urocanate to dihydrourocanate (also named imidazole propionate or deamino-histidine). The physiological electron donor is unknown; it might be the membrane-bound tetraheme cytochrome c (CymA). Enables anaerobic growth with urocanate as a sole terminal electron acceptor, and thus can provide the cells with a niche where no other bacteria can compete and survive. Is unable to reduce cinnamate and other unsaturated organic acids such as acrylic, crotonic, fumaric and orotic acids. Has no fumarate reductase or succinate dehydrogenase activity. The polypeptide is Urocanate reductase (urdA) (Shewanella oneidensis (strain ATCC 700550 / JCM 31522 / CIP 106686 / LMG 19005 / NCIMB 14063 / MR-1)).